Here is a 260-residue protein sequence, read N- to C-terminus: ProSAAS (260 aa).

An N-terminal signal peptide occupies residues 1–33; the sequence is MAGSPLLWGPRAGGVGLLVLLLLGLFRPPPALC. The segment at 34–215 is proSAAS(1-180); sequence ARPVKEPRGL…SADSEGVAAP (182 aa). Residue Thr53 is glycosylated (O-linked (GalNAc...) threonine). The tract at residues 165 to 188 is disordered; it reads RPRPPVYDDGPAGPDAEEAGDETP. A compositionally biased stretch (acidic residues) spans 179–188; sequence DAEEAGDETP. The C-terminal inhibitory domain; interacts with PCSK1 stretch occupies residues 221 to 260; sequence AADHDVGSELPPEGVLGALLRVKRLETPAPQVPARRLLPP. A glycan (O-linked (GalNAc...) serine) is linked at Ser228. The Sufficient for inhibition of PCSK1 motif lies at 239 to 244; the sequence is LLRVKR. Thr247 carries an O-linked (GalNAc...) threonine glycan.

In terms of assembly, interacts via the C-terminal inhibitory domain with PCSK1 66 kDa form. Proteolytically cleaved in the Golgi. Post-translationally, O-glycosylated with a core 1 or possibly core 8 glycan. Expressed in brain and pancreas.

It is found in the secreted. The protein resides in the golgi apparatus. The protein localises to the trans-Golgi network. Its function is as follows. May function in the control of the neuroendocrine secretory pathway. Proposed be a specific endogenous inhibitor of PCSK1. ProSAAS and Big PEN-LEN, both containing the C-terminal inhibitory domain, but not the further processed peptides reduce PCSK1 activity in the endoplasmic reticulum and Golgi. It reduces the activity of the 84 kDa form but not the autocatalytically derived 66 kDa form of PCSK1. Subsequent processing of proSAAS may eliminate the inhibition. Slows down convertase-mediated processing of proopiomelanocortin and proenkephalin. May control the intracellular timing of PCSK1 rather than its total level of activity. Functionally, endogenous ligand for GPR171. Neuropeptide involved in the regulation of feeding. The polypeptide is ProSAAS (PCSK1N) (Homo sapiens (Human)).